The chain runs to 461 residues: Demethyllactenocin mycarosyltransferase (461 aa).

Positions 1-21 (MAGLRPGAGVPPGTPWPISPG) are disordered.

It belongs to the UDP-glycosyltransferase family.

The enzyme catalyses dTDP-beta-L-mycarose + demethyllactenocin = demethylmacrocin + dTDP + H(+). In terms of biological role, involved in the biosynthesis of mycarose which is a 6-deoxyhexose sugar required during production of the macrolide antibiotic tylosin. Catalyzes the transfer of L-mycarosyl from dTDP-beta-L-mycarose to demethyllactenocin to yield demethylmacrocin. This Streptomyces fradiae (Streptomyces roseoflavus) protein is Demethyllactenocin mycarosyltransferase (tylCV).